Reading from the N-terminus, the 451-residue chain is Photosystem II CP43 reaction center protein (451 aa).

Residues Ala1–Thr46 lie on the Cytoplasmic side of the membrane. Positions 13, 27, and 30 each coordinate chlorophyll a. Residues Leu47–Ala71 traverse the membrane as a helical segment. Residues Thr72 to Ala111 lie on the Lumenal side of the membrane. Residues Val92 and Gly106 each coordinate chlorophyll a. The helical transmembrane segment at Ile112–Asn133 threads the bilayer. Residues Lys134–Ala155 lie on the Cytoplasmic side of the membrane. A chlorophyll a-binding site is contributed by Ile138. Residues Lys156–Thr178 traverse the membrane as a helical segment. Topologically, residues Asn179 to Thr232 are lumenal. Chlorophyll a is bound by residues Val211 and Gly225. The chain crosses the membrane as a helical span at residues Thr233–Ser253. At Leu254–Val268 the chain is on the cytoplasmic side. A helical transmembrane segment spans residues Trp269–Ala290. Over Gln291–Gly424 the chain is Lumenal. Glu345 contacts [CaMn4O5] cluster. Residues Leu404, Phe415, and Gly418 each coordinate chlorophyll a. A helical membrane pass occupies residues Arg425–Ser449. The Cytoplasmic segment spans residues Leu450–Asp451.

This sequence belongs to the PsbB/PsbC family. PsbC subfamily. As to quaternary structure, PSII is composed of 1 copy each of membrane proteins PsbA, PsbB, PsbC, PsbD, PsbE, PsbF, PsbH, PsbI, PsbJ, PsbK, PsbL, PsbM, PsbT, PsbX, PsbY, PsbZ, Psb30/Ycf12, peripheral proteins PsbO, CyanoQ (PsbQ), PsbU, PsbV and a large number of cofactors. It forms dimeric complexes. The cofactor is Binds multiple chlorophylls and provides some of the ligands for the Ca-4Mn-5O cluster of the oxygen-evolving complex. It may also provide a ligand for a Cl- that is required for oxygen evolution. PSII binds additional chlorophylls, carotenoids and specific lipids..

It localises to the cellular thylakoid membrane. Functionally, one of the components of the core complex of photosystem II (PSII). It binds chlorophyll and helps catalyze the primary light-induced photochemical processes of PSII. PSII is a light-driven water:plastoquinone oxidoreductase, using light energy to abstract electrons from H(2)O, generating O(2) and a proton gradient subsequently used for ATP formation. The chain is Photosystem II CP43 reaction center protein from Thermostichus vulcanus (Synechococcus vulcanus).